A 210-amino-acid polypeptide reads, in one-letter code: Large ribosomal subunit protein uL3 (210 aa).

The interval 125–154 is disordered; it reads RHGFRGGPKTHGQSDRHRAPGSIGAGTTPG.

This sequence belongs to the universal ribosomal protein uL3 family. In terms of assembly, part of the 50S ribosomal subunit. Forms a cluster with proteins L14 and L19.

One of the primary rRNA binding proteins, it binds directly near the 3'-end of the 23S rRNA, where it nucleates assembly of the 50S subunit. This is Large ribosomal subunit protein uL3 from Chloroflexus aggregans (strain MD-66 / DSM 9485).